We begin with the raw amino-acid sequence, 685 residues long: UvrABC system protein C (685 aa).

Residues 15–93 form the GIY-YIG domain; it reads ALPGVYRYFD…IKTQNPRFNI (79 aa). The 36-residue stretch at 214-249 folds into the UVR domain; it reads QELLQAMEARMMAYSGQLAFEQAAEVRNQMQALSRV. Residues 365 to 388 show a composition bias toward low complexity; the sequence is AQGGDHAPAAQGGDPPPAASSGGH. Residues 365 to 391 are disordered; it reads AQGGDHAPAAQGGDPPPAASSGGHPLR.

It belongs to the UvrC family. Interacts with UvrB in an incision complex.

It is found in the cytoplasm. In terms of biological role, the UvrABC repair system catalyzes the recognition and processing of DNA lesions. UvrC both incises the 5' and 3' sides of the lesion. The N-terminal half is responsible for the 3' incision and the C-terminal half is responsible for the 5' incision. This is UvrABC system protein C from Verminephrobacter eiseniae (strain EF01-2).